Here is a 236-residue protein sequence, read N- to C-terminus: MLTRKQHELLLFIHARLKETGIPPSFDEMKEALDLASKSGIHRLITALEERGFIRRLPNRARALEVLRLPDSIAPGLAAPRKFSPSVIEGGQGRSSPAPRPAANNDDETSVVSIPVMGRIAAGVPIDAIQHRTHSIGVPPDMITGGEHYALEVKGDSMIEAGIFDGDTVIIRQTQAANPGDIVVALVDEEEATLKRFRRKGASIALEAANPAYETRIFGPDRVKVQGRLVGLIRRY.

Residues 26–46 (FDEMKEALDLASKSGIHRLIT) constitute a DNA-binding region (H-T-H motif). Residues 84 to 107 (SPSVIEGGQGRSSPAPRPAANNDD) are disordered. Catalysis depends on for autocatalytic cleavage activity residues Ser157 and Lys195.

The protein belongs to the peptidase S24 family. As to quaternary structure, homodimer.

The catalysed reaction is Hydrolysis of Ala-|-Gly bond in repressor LexA.. Functionally, represses a number of genes involved in the response to DNA damage (SOS response), including recA and lexA. In the presence of single-stranded DNA, RecA interacts with LexA causing an autocatalytic cleavage which disrupts the DNA-binding part of LexA, leading to derepression of the SOS regulon and eventually DNA repair. This Chelativorans sp. (strain BNC1) protein is LexA repressor.